We begin with the raw amino-acid sequence, 368 residues long: tRNA-specific 2-thiouridylase MnmA (368 aa).

ATP-binding positions include 10-17 (AMSGGVDS) and methionine 36. Cysteine 108 (nucleophile) is an active-site residue. The cysteines at positions 108 and 206 are disulfide-linked. ATP is bound at residue glycine 132. The interaction with tRNA stretch occupies residues 156–158 (KDQ). Cysteine 206 acts as the Cysteine persulfide intermediate in catalysis. Residues 312–313 (RY) are interaction with tRNA.

Belongs to the MnmA/TRMU family.

The protein localises to the cytoplasm. The enzyme catalyses S-sulfanyl-L-cysteinyl-[protein] + uridine(34) in tRNA + AH2 + ATP = 2-thiouridine(34) in tRNA + L-cysteinyl-[protein] + A + AMP + diphosphate + H(+). In terms of biological role, catalyzes the 2-thiolation of uridine at the wobble position (U34) of tRNA, leading to the formation of s(2)U34. This Natranaerobius thermophilus (strain ATCC BAA-1301 / DSM 18059 / JW/NM-WN-LF) protein is tRNA-specific 2-thiouridylase MnmA.